We begin with the raw amino-acid sequence, 522 residues long: Maturase K (522 aa).

Belongs to the intron maturase 2 family. MatK subfamily.

It is found in the plastid. The protein resides in the chloroplast. Functionally, usually encoded in the trnK tRNA gene intron. Probably assists in splicing its own and other chloroplast group II introns. The chain is Maturase K from Gladiolus papilio (Goldblotch gladiolus).